The following is a 627-amino-acid chain: 1-deoxy-D-xylulose-5-phosphate synthase (627 aa).

Thiamine diphosphate contacts are provided by residues His87 and 128-130; that span reads GHS. Residue Asp159 participates in Mg(2+) binding. Thiamine diphosphate is bound by residues 160 to 161, Asn188, Phe295, and Glu375; that span reads GA. Asn188 provides a ligand contact to Mg(2+).

It belongs to the transketolase family. DXPS subfamily. In terms of assembly, homodimer. Mg(2+) serves as cofactor. The cofactor is thiamine diphosphate.

The catalysed reaction is D-glyceraldehyde 3-phosphate + pyruvate + H(+) = 1-deoxy-D-xylulose 5-phosphate + CO2. It functions in the pathway metabolic intermediate biosynthesis; 1-deoxy-D-xylulose 5-phosphate biosynthesis; 1-deoxy-D-xylulose 5-phosphate from D-glyceraldehyde 3-phosphate and pyruvate: step 1/1. In terms of biological role, catalyzes the acyloin condensation reaction between C atoms 2 and 3 of pyruvate and glyceraldehyde 3-phosphate to yield 1-deoxy-D-xylulose-5-phosphate (DXP). This chain is 1-deoxy-D-xylulose-5-phosphate synthase, found in Pseudomonas paraeruginosa (strain DSM 24068 / PA7) (Pseudomonas aeruginosa (strain PA7)).